A 451-amino-acid polypeptide reads, in one-letter code: UDP-N-acetylmuramoylalanine--D-glutamate ligase (451 aa).

118-124 (GTKGKST) contributes to the ATP binding site.

This sequence belongs to the MurCDEF family.

It localises to the cytoplasm. The catalysed reaction is UDP-N-acetyl-alpha-D-muramoyl-L-alanine + D-glutamate + ATP = UDP-N-acetyl-alpha-D-muramoyl-L-alanyl-D-glutamate + ADP + phosphate + H(+). The protein operates within cell wall biogenesis; peptidoglycan biosynthesis. Cell wall formation. Catalyzes the addition of glutamate to the nucleotide precursor UDP-N-acetylmuramoyl-L-alanine (UMA). The chain is UDP-N-acetylmuramoylalanine--D-glutamate ligase from Borreliella burgdorferi (strain ZS7) (Borrelia burgdorferi).